The chain runs to 430 residues: MLPQEVENILDVVIRHNTWRRKETINLIASENVMSPLAELVYINDLAGRYAEGIVGSRYYQGVRYVDILEDALSKKFANVLGARFVDVRPISGTIANLAAYFALVPEGGTVASLPIKYGGHISHNTVGGLKALRLKAVELPWDLENFNIDVDAARKLIEEKRPNLIILGASLYLFPHPVKEIAEVAKTVGAYVLHDSAHVFGLIVGGAFPNPLREGAHLTTASTHKTFPGPQGGVIATVLDEEKNSQIQRAVFPTFTSNYHLHRYAATYVTLVEMEVFGREYATRIVENARALAEALAAEGVPPVAERQGYTKTHQVAVDVSKFGGGDKVAALLEEANIIVNKNALPWDKSVLKPSGIRIGVQEMTRFGMGKDEMREIARFIARVLRGEDVNNIKRDVVEFRKSYLEIKYGFKISRDIVDKIFHSLNLYT.

120–122 (GHI) is a (6S)-5,6,7,8-tetrahydrofolate binding site. Position 226 is an N6-(pyridoxal phosphate)lysine (lysine 226).

The protein belongs to the SHMT family. As to quaternary structure, homodimer. It depends on pyridoxal 5'-phosphate as a cofactor.

Its subcellular location is the cytoplasm. It participates in amino-acid biosynthesis; glycine biosynthesis; glycine from L-serine: step 1/1. Functionally, catalyzes the reversible interconversion of serine and glycine with a modified folate serving as the one-carbon carrier. Also exhibits a pteridine-independent aldolase activity toward beta-hydroxyamino acids, producing glycine and aldehydes, via a retro-aldol mechanism. The protein is Serine hydroxymethyltransferase of Pyrobaculum islandicum (strain DSM 4184 / JCM 9189 / GEO3).